The sequence spans 761 residues: Phosphoribosylformylglycinamidine synthase subunit PurL (761 aa).

Residue His49 is part of the active site. ATP contacts are provided by Tyr52 and Lys92. Glu94 is a binding site for Mg(2+). Residues 95 to 98 and Arg117 each bind substrate; that span reads SHNH. His96 (proton acceptor) is an active-site residue. Asp118 is a Mg(2+) binding site. Position 241 (Gln241) interacts with substrate. Asp269 is a Mg(2+) binding site. Substrate is bound at residue 318 to 320; sequence ESQ. Residues Asn502 and Gly539 each coordinate ATP. A Mg(2+)-binding site is contributed by Asn540. Ser542 contributes to the substrate binding site.

It belongs to the FGAMS family. Monomer. Part of the FGAM synthase complex composed of 1 PurL, 1 PurQ and 2 PurS subunits.

Its subcellular location is the cytoplasm. It carries out the reaction N(2)-formyl-N(1)-(5-phospho-beta-D-ribosyl)glycinamide + L-glutamine + ATP + H2O = 2-formamido-N(1)-(5-O-phospho-beta-D-ribosyl)acetamidine + L-glutamate + ADP + phosphate + H(+). Its pathway is purine metabolism; IMP biosynthesis via de novo pathway; 5-amino-1-(5-phospho-D-ribosyl)imidazole from N(2)-formyl-N(1)-(5-phospho-D-ribosyl)glycinamide: step 1/2. Functionally, part of the phosphoribosylformylglycinamidine synthase complex involved in the purines biosynthetic pathway. Catalyzes the ATP-dependent conversion of formylglycinamide ribonucleotide (FGAR) and glutamine to yield formylglycinamidine ribonucleotide (FGAM) and glutamate. The FGAM synthase complex is composed of three subunits. PurQ produces an ammonia molecule by converting glutamine to glutamate. PurL transfers the ammonia molecule to FGAR to form FGAM in an ATP-dependent manner. PurS interacts with PurQ and PurL and is thought to assist in the transfer of the ammonia molecule from PurQ to PurL. The protein is Phosphoribosylformylglycinamidine synthase subunit PurL of Chlorobium chlorochromatii (strain CaD3).